Reading from the N-terminus, the 490-residue chain is MAESILDRTINRFWYKLGDDCLSESQFDLMIRLMEESLDGDQIIDLTSLPSDNLQVEQVMTTTEDSISEEESEFLLAIGETSEEESDSGEEPEFEQVRMDRTGGTEIPKEEDGGEPSRYNERKRKTTEDRYFPTQPKTIPGQKQTTMGMLNIDCQANRRTLIDDWAAEIGLIVKTNREDYLDPETILLLMEHKTSGIAKELIRNTRWNRTTGDIIEQVIDAMYTMFLGLNYSDNKVAEKIEEQEKAKIRMTKLQLCDICYLEEFTCDYEKNMYKTELADFPGYINQYLSKIPIIGEKALTRFRHEANGTSIYSLGFAAKIVKEELSKICDLTKKQKKLKKFNKKCCSIGEASVEYGCKKTSKKKYHKRYKKKYKAYKPYKKKKKFRSGKYFKPKEKKGSKQKYCPKGKKDCRCWICNIEGHYANECPNRQSSEKAHILQQAEKLGLQPIEEPYEGVQEVFILEYKEEEEETSTEEDDGSSTSEDSDSESD.

Residues 79 to 143 form a disordered region; that stretch reads GETSEEESDS…TQPKTIPGQK (65 aa). The span at 81 to 94 shows a compositional bias: acidic residues; that stretch reads TSEEESDSGEEPEF. Residues 95 to 111 are compositionally biased toward basic and acidic residues; sequence EQVRMDRTGGTEIPKEE. Residues 122 to 125 carry the Nuclear localization signal motif; that stretch reads RKRK. The CCHC-type zinc-finger motif lies at 411 to 428; that stretch reads CRCWICNIEGHYANECPN. The interval 464–490 is disordered; that stretch reads YKEEEEETSTEEDDGSSTSEDSDSESD. Residues 465–490 show a composition bias toward acidic residues; the sequence is KEEEEETSTEEDDGSSTSEDSDSESD.

The protein belongs to the caulimoviridae capsid protein family. As to quaternary structure, interacts (via nuclear localization signal) with host importin alpha.

The protein resides in the virion. It localises to the host nucleus. In terms of biological role, self assembles to form an icosahedral capsid, about 50 nm in diameter, nm, composed of 420 subunits of the viral capsid protein. The capsid encapsulates the genomic dsDNA. Following virus entry into host cell, provides nuclear import of the viral genome. Virus particles do not enter the nucleus, but dock at the nuclear membrane through the interaction with host importins. This is Capsid protein from Arabidopsis thaliana (Mouse-ear cress).